A 264-amino-acid chain; its full sequence is Transcription initiation factor TFIID subunit 9 (264 aa).

At K5 the chain carries N6-acetyllysine. Residues S149, S152, S155, and S158 each carry the phosphoserine modification. A disordered region spans residues 150–174 (VGSVSSRPSTPTLGTPTPQAMSVST). Polar residues predominate over residues 151 to 174 (GSVSSRPSTPTLGTPTPQAMSVST). Phosphothreonine occurs at positions 159, 161, 164, and 178. S181 and S196 each carry phosphoserine. Positions 233–264 (QNTANESANALKRKREEEDDDDDDDDDDYDNL) are disordered. The segment covering 249–264 (EEDDDDDDDDDDYDNL) has biased composition (acidic residues).

This sequence belongs to the TAF9 family. In terms of assembly, component of the TFIID basal transcription factor complex, composed of TATA-box-binding protein TBP, and a number of TBP-associated factors (TAFs), including TAF1, TAF2, TAF3, TAF4, TAF5, TAF6, TAF7, TAF8, TAF9, TAF10, TAF11, TAF12 and TAF13. Component of the TATA-binding protein-free TAF complex (TFTC), the PCAF histone acetylase complex and the STAGA transcription coactivator-HAT complex. The PCAF complex consists at least of TADA2L/ADA2, SUPT3H/SPT3, TADA3L/ADA3, TAF5L/PAF65-beta, TAF6L/PAF65-alpha, TAF10/TAFII30, TAF12/TAFII20, TAF9/TAFII31 and TRRAP. The STAGA transcription coactivator-HAT complex consists at least of SUPT3H, GCN5L2, SUPT7L, TAF5L, TAF6L, TADA3L, TAD1L, TAF10, TAF12, TRRAP and TAF9. Binds N-terminal domain of p53/TP53 which is essential for transcription. Component of some MLL1/MLL complex, at least composed of the core components KMT2A/MLL1, ASH2L, HCFC1/HCF1, WDR5 and RBBP5, as well as the facultative components BACC1, CHD8, E2F6, HSP70, INO80C, KANSL1, LAS1L, MAX, MCRS1, MGA, MYST1/MOF, PELP1, PHF20, PRP31, RING2, RUVB1/TIP49A, RUVB2/TIP49B, SENP3, TAF1, TAF4, TAF6, TAF7, TAF9 and TEX10. Binds TFIIB and the Herpes simplex virus activator VP16. Forms a heterodimer with TAF6 in a complex with the TAF4B-TAF12 heterodimer. Also interacts with TAF5. Binds directly DNA. Increased DNA binding when complexed with TAF6.

Its subcellular location is the nucleus. Its function is as follows. The TFIID basal transcription factor complex plays a major role in the initiation of RNA polymerase II (Pol II)-dependent transcription. TFIID recognizes and binds promoters with or without a TATA box via its subunit TBP, a TATA-box-binding protein, and promotes assembly of the pre-initiation complex (PIC). The TFIID complex consists of TBP and TBP-associated factors (TAFs), including TAF1, TAF2, TAF3, TAF4, TAF5, TAF6, TAF7, TAF8, TAF9, TAF10, TAF11, TAF12 and TAF13. TAF9 is also a component of the TBP-free TAFII complex (TFTC), the PCAF histone acetylase complex and the STAGA transcription coactivator-HAT complex. TAF9 and its paralog TAF9B are involved in transcriptional activation as well as repression of distinct but overlapping sets of genes. Essential for cell viability. May have a role in gene regulation associated with apoptosis. This is Transcription initiation factor TFIID subunit 9 from Rattus norvegicus (Rat).